A 765-amino-acid polypeptide reads, in one-letter code: MPRQFPKLNMSDLDEHVRLLAEKVFAKVLREEDSKDVMSLFTVPKDCPIGQKEAKERELQKELAEQKSVETAKRKKSFKMIRSQSMSLQMPTQDWKGPPSVSPAMSPTTPLVLGAASKPGLAPYDMPEYQRATISGDYCAGITMEDYEQAAKSLAKALMIREKYARLAYHRFPRTTAQYLAHQGESVPLEEGLPDFHPPPLPQEDPYCLDDAPPNLGYLVRMQGGVLFVYDNQTMLERQEPHSLPYPDLETYIVDMSHILALITDGPTKTYCHRRLNFLESKFSLHEMLNEMSEFKELKSNPHRDFYNVRKVDTHIHAAACMNQKHLLRFIKYTYQTEPDRTVAEKLGRKITLRQVFDSLHMDPYDLTVDSLDVHAGRQTFHGFDKFNSKYNPVGASELRDLYLKTENYLGGEYFARMVKEVARELEDSKYQYSEPRLSIYGRSPKEWSSLARWFIQHKVYSPNMRWIIQVPRIYDIFRSKKLLPSFGKMLENIFLPLFQATINPQDHRELHLFLKYVTGFDSVDDESKHSDHMFSDKSPSPDLWTSEQNPPYSYYLYYMYANIMVLNNLRRERGLSTFLFRPHCGEAGSITHLVSAFLTADNISHGLLLKKSPVLQYLYYLAQIPIAMSPLSNNSLFLEYSKNPLREFLHKGLHVSLSTDDPMQFHYTKEALMEEYAIAAQVWKLSTCDLCEIARNSVLQSGLSHQEKQKFLGQNYYKEGPEGNDIRKTNVAQIRMAFRYETLCNELSFLSDAMKSEEITALAD.

Phosphoserine occurs at positions 85 and 106. Zn(2+) is bound by residues H315 and H317. Substrate-binding positions include H317 and 386–391 (KFNSKY). H584 is a Zn(2+) binding site. E587 contributes to the substrate binding site. H606 serves as the catalytic Proton acceptor. Residue D661 participates in Zn(2+) binding. 662–665 (DPMQ) contributes to the substrate binding site.

The protein belongs to the metallo-dependent hydrolases superfamily. Adenosine and AMP deaminases family. As to quaternary structure, homotetramer. The cofactor is Zn(2+). In terms of tissue distribution, expressed in adult tissues such as aorta, heart, kidney, lung, muscle and thyroid. Weakly expressed in thyroid and not detected in liver.

The enzyme catalyses AMP + H2O + H(+) = IMP + NH4(+). Its pathway is purine metabolism; IMP biosynthesis via salvage pathway; IMP from AMP: step 1/1. AMP deaminase plays a critical role in energy metabolism. This is AMP deaminase 3 from Rattus norvegicus (Rat).